The following is a 211-amino-acid chain: tRNA (guanine-N(7)-)-methyltransferase (211 aa).

Positions 44, 69, 96, and 118 each coordinate S-adenosyl-L-methionine. Residue Asp118 is part of the active site. Lys122 lines the substrate pocket. Positions Lys124–Arg129 are interaction with RNA. Residues Asp154 and Thr191–Glu194 each bind substrate.

Belongs to the class I-like SAM-binding methyltransferase superfamily. TrmB family.

It catalyses the reaction guanosine(46) in tRNA + S-adenosyl-L-methionine = N(7)-methylguanosine(46) in tRNA + S-adenosyl-L-homocysteine. The protein operates within tRNA modification; N(7)-methylguanine-tRNA biosynthesis. Catalyzes the formation of N(7)-methylguanine at position 46 (m7G46) in tRNA. This is tRNA (guanine-N(7)-)-methyltransferase from Streptococcus pyogenes serotype M18 (strain MGAS8232).